Here is a 348-residue protein sequence, read N- to C-terminus: Tripartite motif-containing protein 16-like protein (348 aa).

The B30.2/SPRY domain maps to 139–337 (YWTSKPEPST…RIVDLGEEPE (199 aa)).

It belongs to the TRIM/RBCC family.

It is found in the cytoplasm. This chain is Tripartite motif-containing protein 16-like protein (TRIM16L), found in Homo sapiens (Human).